Here is a 796-residue protein sequence, read N- to C-terminus: AUGMIN subunit 5 (796 aa).

Residues 79–120 form a disordered region; the sequence is HGGSSNASIGSSVNPGKEESKSKGRRKDKTVTGESSSYAEDR. Positions 80-92 are enriched in polar residues; sequence GGSSNASIGSSVN. Coiled-coil stretches lie at residues 115–191 and 462–501; these read SYAE…EATR and GKER…LKKK.

Belongs to the HAUS5 family. As to quaternary structure, part of the augmin complex composed of 8 subunits. The complex acts on microtubules and interacts with gamma-tubulin in spindles and the phragmoplast.

It localises to the cytoplasm. It is found in the cytoskeleton. The protein resides in the spindle. Its subcellular location is the phragmoplast. Involved in microtubules reorganization during spindle and phragmoplast development. The polypeptide is AUGMIN subunit 5 (Arabidopsis thaliana (Mouse-ear cress)).